The following is a 299-amino-acid chain: Acetylglutamate kinase (299 aa).

Substrate is bound by residues 72 to 73 (GG), Arg94, and Asn196.

It belongs to the acetylglutamate kinase family. ArgB subfamily.

It is found in the cytoplasm. The catalysed reaction is N-acetyl-L-glutamate + ATP = N-acetyl-L-glutamyl 5-phosphate + ADP. It functions in the pathway amino-acid biosynthesis; L-arginine biosynthesis; N(2)-acetyl-L-ornithine from L-glutamate: step 2/4. Catalyzes the ATP-dependent phosphorylation of N-acetyl-L-glutamate. This chain is Acetylglutamate kinase, found in Burkholderia vietnamiensis (strain G4 / LMG 22486) (Burkholderia cepacia (strain R1808)).